Reading from the N-terminus, the 380-residue chain is Succinate--CoA ligase [ADP-forming] subunit beta (380 aa).

The ATP-grasp domain occupies 9–236 (KGVFADAGIP…EAAGDELEAK (228 aa)). Residues lysine 45, 52–54 (GRG), glutamate 91, valine 94, and glutamate 99 each bind ATP. Positions 191 and 205 each coordinate Mg(2+). Substrate is bound by residues asparagine 256 and 313 to 315 (GIT).

The protein belongs to the succinate/malate CoA ligase beta subunit family. In terms of assembly, heterotetramer of two alpha and two beta subunits. Mg(2+) is required as a cofactor.

The catalysed reaction is succinate + ATP + CoA = succinyl-CoA + ADP + phosphate. It catalyses the reaction GTP + succinate + CoA = succinyl-CoA + GDP + phosphate. It functions in the pathway carbohydrate metabolism; tricarboxylic acid cycle; succinate from succinyl-CoA (ligase route): step 1/1. Succinyl-CoA synthetase functions in the citric acid cycle (TCA), coupling the hydrolysis of succinyl-CoA to the synthesis of either ATP or GTP and thus represents the only step of substrate-level phosphorylation in the TCA. The beta subunit provides nucleotide specificity of the enzyme and binds the substrate succinate, while the binding sites for coenzyme A and phosphate are found in the alpha subunit. This Natronomonas pharaonis (strain ATCC 35678 / DSM 2160 / CIP 103997 / JCM 8858 / NBRC 14720 / NCIMB 2260 / Gabara) (Halobacterium pharaonis) protein is Succinate--CoA ligase [ADP-forming] subunit beta.